The chain runs to 938 residues: Isoleucine--tRNA ligase (938 aa).

Positions 58-68 (PYANGSIHIGH) match the 'HIGH' region motif. L-isoleucyl-5'-AMP is bound at residue Glu561. Residues 602–606 (KMSKS) carry the 'KMSKS' region motif. Position 605 (Lys605) interacts with ATP. Residues Cys901, Cys904, Cys921, and Cys924 each coordinate Zn(2+).

The protein belongs to the class-I aminoacyl-tRNA synthetase family. IleS type 1 subfamily. In terms of assembly, monomer. Zn(2+) serves as cofactor.

It localises to the cytoplasm. It carries out the reaction tRNA(Ile) + L-isoleucine + ATP = L-isoleucyl-tRNA(Ile) + AMP + diphosphate. Catalyzes the attachment of isoleucine to tRNA(Ile). As IleRS can inadvertently accommodate and process structurally similar amino acids such as valine, to avoid such errors it has two additional distinct tRNA(Ile)-dependent editing activities. One activity is designated as 'pretransfer' editing and involves the hydrolysis of activated Val-AMP. The other activity is designated 'posttransfer' editing and involves deacylation of mischarged Val-tRNA(Ile). The polypeptide is Isoleucine--tRNA ligase (Citrobacter koseri (strain ATCC BAA-895 / CDC 4225-83 / SGSC4696)).